The chain runs to 739 residues: Catalase-peroxidase (739 aa).

The signal sequence occupies residues 1-23 (MLKKIVTALGMSGMLLASNSAIA). Residues 100–221 (WHDAGTYRIY…YAATQMGLIY (122 aa)) constitute a cross-link (tryptophyl-tyrosyl-methioninium (Trp-Tyr) (with M-247)). Catalysis depends on His-101, which acts as the Proton acceptor. The tryptophyl-tyrosyl-methioninium (Tyr-Met) (with W-100) cross-link spans 221–247 (YVNPEGPDGKPDIKGAASEIRQAFRAM). Heme b is bound at residue His-262.

The protein belongs to the peroxidase family. Peroxidase/catalase subfamily. As to quaternary structure, homodimer or homotetramer. The cofactor is heme b. Formation of the three residue Trp-Tyr-Met cross-link is important for the catalase, but not the peroxidase activity of the enzyme.

The enzyme catalyses H2O2 + AH2 = A + 2 H2O. The catalysed reaction is 2 H2O2 = O2 + 2 H2O. Bifunctional enzyme with both catalase and broad-spectrum peroxidase activity. In Francisella tularensis subsp. novicida (strain U112), this protein is Catalase-peroxidase.